Consider the following 370-residue polypeptide: UDP-N-acetylglucosamine--N-acetylmuramyl-(pentapeptide) pyrophosphoryl-undecaprenol N-acetylglucosamine transferase (370 aa).

UDP-N-acetyl-alpha-D-glucosamine-binding positions include 15–17 (TGG), N129, R170, S199, I254, and Q299.

The protein belongs to the glycosyltransferase 28 family. MurG subfamily.

The protein localises to the cell inner membrane. The enzyme catalyses di-trans,octa-cis-undecaprenyl diphospho-N-acetyl-alpha-D-muramoyl-L-alanyl-D-glutamyl-meso-2,6-diaminopimeloyl-D-alanyl-D-alanine + UDP-N-acetyl-alpha-D-glucosamine = di-trans,octa-cis-undecaprenyl diphospho-[N-acetyl-alpha-D-glucosaminyl-(1-&gt;4)]-N-acetyl-alpha-D-muramoyl-L-alanyl-D-glutamyl-meso-2,6-diaminopimeloyl-D-alanyl-D-alanine + UDP + H(+). It functions in the pathway cell wall biogenesis; peptidoglycan biosynthesis. Its function is as follows. Cell wall formation. Catalyzes the transfer of a GlcNAc subunit on undecaprenyl-pyrophosphoryl-MurNAc-pentapeptide (lipid intermediate I) to form undecaprenyl-pyrophosphoryl-MurNAc-(pentapeptide)GlcNAc (lipid intermediate II). This is UDP-N-acetylglucosamine--N-acetylmuramyl-(pentapeptide) pyrophosphoryl-undecaprenol N-acetylglucosamine transferase from Magnetococcus marinus (strain ATCC BAA-1437 / JCM 17883 / MC-1).